A 180-amino-acid chain; its full sequence is Ribulose bisphosphate carboxylase small subunit 1A, chloroplastic (180 aa).

A chloroplast-targeting transit peptide spans 1-54; the sequence is MASSMLSSATMVASPAQATMVAPFNGLKSSAAFPATRKANNDITSITSNGGRVN. The residue at position 113 (Ser-113) is a Phosphoserine.

Belongs to the RuBisCO small chain family. In terms of assembly, heterohexadecamer of 8 large and 8 small subunits.

It localises to the plastid. The protein localises to the chloroplast membrane. The protein resides in the chloroplast stroma. Its function is as follows. RuBisCO catalyzes two reactions: the carboxylation of D-ribulose 1,5-bisphosphate, the primary event in carbon dioxide fixation, as well as the oxidative fragmentation of the pentose substrate. Both reactions occur simultaneously and in competition at the same active site. Although the small subunit is not catalytic it is essential for maximal activity. The polypeptide is Ribulose bisphosphate carboxylase small subunit 1A, chloroplastic (RBCS-1A) (Arabidopsis thaliana (Mouse-ear cress)).